We begin with the raw amino-acid sequence, 719 residues long: Protein STRUBBELIG-RECEPTOR FAMILY 6 (719 aa).

Positions 1–29 (MRENWAVVALFTLCIVGFELRFIHGATDA) are cleaved as a signal peptide. Residues 30–293 (SDTSALNTLF…SKKSGIGAGA (264 aa)) are Extracellular-facing. LRR repeat units follow at residues 97 to 118 (SLTELDLSSNNLGGDLPYQFPP), 119 to 140 (NLQRLNLANNQFTGAASYSLSQ), 143 to 164 (PLKYLNLGHNQFKGQIAIDFSK), 167 to 190 (SLTTLDFSFNSFTNSLPATFSSLT), 191 to 213 (SLKSLYLQNNQFSGTVDVLAGLP), and 214 to 234 (LETLNIANNDFTGWIPSSLKG). The tract at residues 242-287 (NSFNTGPAPPPPPGTPPIRGSPSRKSGGRESRSSDESTRNGDSKKS) is disordered. Residues 248 to 257 (PAPPPPPGTP) show a composition bias toward pro residues. The segment covering 268 to 286 (GGRESRSSDESTRNGDSKK) has biased composition (basic and acidic residues). The chain crosses the membrane as a helical span at residues 294-314 (IAGIIISLLVVTALLVAFFLF). Over 315-719 (RRKKSKRSSP…GSADTTSDYM (405 aa)) the chain is Cytoplasmic. Disordered regions lie at residues 322–355 (SSPMDIEKTDNQPFTLASNDFHENNSIQSSSSVE) and 364–383 (SINLRPPPIDRNKSFDDEDS). Polar residues predominate over residues 332-354 (NQPFTLASNDFHENNSIQSSSSV). At Ser377 the chain carries Phosphoserine. The Protein kinase domain maps to 416–690 (FSVDNLLGEG…SEVVQALVVL (275 aa)). ATP is bound by residues 422-430 (LGEGTFGRV) and Lys444. The segment at 700–719 (TVGVDPSQRAGSADTTSDYM) is disordered. The segment covering 708 to 719 (RAGSADTTSDYM) has biased composition (polar residues).

The protein belongs to the protein kinase superfamily. Ser/Thr protein kinase family. As to expression, expressed in seedlings, roots, stems, leaves, flowers and siliques.

Its subcellular location is the membrane. This is Protein STRUBBELIG-RECEPTOR FAMILY 6 (SRF6) from Arabidopsis thaliana (Mouse-ear cress).